Consider the following 348-residue polypeptide: Propane 2-monooxygenase, reductase component (348 aa).

Residues 5–95 form the 2Fe-2S ferredoxin-type domain; sequence HKINFEPVDI…DCTIELLNFD (91 aa). C39, C44, C47, and C79 together coordinate [2Fe-2S] cluster. The 102-residue stretch at 105-206 folds into the FAD-binding FR-type domain; the sequence is IQDVRTEVLA…TGPYGSFTLK (102 aa).

The protein belongs to the bacterial ring-hydroxylating dioxygenase ferredoxin reductase family. As to quaternary structure, the propane 2-monooxygenase multicomponent enzyme system is composed of an electron transfer component and a monooxygenase component interacting with the effector protein MimD. The electron transfer component is composed of a reductase (MimB), and the monooxygenase component is formed by a large subunit (MimA) and a small subunit (MimC). FAD serves as cofactor. Requires [2Fe-2S] cluster as cofactor.

Its function is as follows. Reductase component of the propane 2-monooxygenase multicomponent enzyme system which is involved in the degradation of propane via the O2-dependent hydroxylation of propane. Reductase catalyzes the transfer of electrons from NADH or NADPH to monooxygenase. This Mycolicibacterium goodii (Mycobacterium goodii) protein is Propane 2-monooxygenase, reductase component.